A 203-amino-acid chain; its full sequence is Putative archaetidylserine decarboxylase proenzyme (203 aa).

Catalysis depends on Ser-171, which acts as the Schiff-base intermediate with substrate; via pyruvic acid. Ser-171 bears the Pyruvic acid (Ser); by autocatalysis mark.

Belongs to the phosphatidylserine decarboxylase family. PSD-A subfamily. In terms of assembly, heterodimer of a large membrane-associated beta subunit and a small pyruvoyl-containing alpha subunit. The cofactor is pyruvate. Post-translationally, is synthesized initially as an inactive proenzyme. Formation of the active enzyme involves a self-maturation process in which the active site pyruvoyl group is generated from an internal serine residue via an autocatalytic post-translational modification. Two non-identical subunits are generated from the proenzyme in this reaction, and the pyruvate is formed at the N-terminus of the alpha chain, which is derived from the carboxyl end of the proenzyme. The post-translation cleavage follows an unusual pathway, termed non-hydrolytic serinolysis, in which the side chain hydroxyl group of the serine supplies its oxygen atom to form the C-terminus of the beta chain, while the remainder of the serine residue undergoes an oxidative deamination to produce ammonia and the pyruvoyl prosthetic group on the alpha chain.

The protein localises to the cell membrane. The enzyme catalyses archaetidylserine + H(+) = archaetidylethanolamine + CO2. Catalyzes the formation of archaetidylethanolamine (PtdEtn) from archaetidylserine (PtdSer). In Methanosarcina barkeri (strain Fusaro / DSM 804), this protein is Putative archaetidylserine decarboxylase proenzyme.